We begin with the raw amino-acid sequence, 178 residues long: Probable DNA-directed RNA polymerase subunit delta (178 aa).

In terms of domain architecture, HTH HARE-type spans 14–81 (LSLIDVAHFI…GNNTWGLRAW (68 aa)). Disordered stretches follow at residues 88–122 (DEEV…DYDD) and 141–178 (LDED…PEDK). Composition is skewed to acidic residues over residues 105–122 (DDED…DYDD), 141–150 (LDEDEDDDDH), and 161–178 (TVED…PEDK).

The protein belongs to the RpoE family. As to quaternary structure, RNAP is composed of a core of 2 alpha, a beta and a beta' subunits. The core is associated with a delta subunit and one of several sigma factors.

Functionally, participates in both the initiation and recycling phases of transcription. In the presence of the delta subunit, RNAP displays an increased specificity of transcription, a decreased affinity for nucleic acids, and an increased efficiency of RNA synthesis because of enhanced recycling. This chain is Probable DNA-directed RNA polymerase subunit delta, found in Listeria monocytogenes serovar 1/2a (strain ATCC BAA-679 / EGD-e).